The primary structure comprises 239 residues: Ribonuclease HII (239 aa).

Positions 30 to 221 (GPVAGVDEVG…VRRLVTAGTP (192 aa)) constitute an RNase H type-2 domain. 3 residues coordinate a divalent metal cation: Asp36, Glu37, and Asp130.

Belongs to the RNase HII family. Mn(2+) serves as cofactor. Requires Mg(2+) as cofactor.

The protein localises to the cytoplasm. It catalyses the reaction Endonucleolytic cleavage to 5'-phosphomonoester.. Endonuclease that specifically degrades the RNA of RNA-DNA hybrids. This is Ribonuclease HII from Mycobacterium sp. (strain KMS).